A 325-amino-acid chain; its full sequence is tRNA pseudouridine synthase B (325 aa).

Aspartate 49 functions as the Nucleophile in the catalytic mechanism.

It belongs to the pseudouridine synthase TruB family. Type 1 subfamily.

The catalysed reaction is uridine(55) in tRNA = pseudouridine(55) in tRNA. Responsible for synthesis of pseudouridine from uracil-55 in the psi GC loop of transfer RNAs. The protein is tRNA pseudouridine synthase B of Mesorhizobium japonicum (strain LMG 29417 / CECT 9101 / MAFF 303099) (Mesorhizobium loti (strain MAFF 303099)).